We begin with the raw amino-acid sequence, 594 residues long: Isocitrate dehydrogenase kinase/phosphatase (594 aa).

Residues 315–321 (APGIRGM) and lysine 336 each bind ATP. The active site involves aspartate 371.

Belongs to the AceK family.

It localises to the cytoplasm. It catalyses the reaction L-seryl-[isocitrate dehydrogenase] + ATP = O-phospho-L-seryl-[isocitrate dehydrogenase] + ADP + H(+). Its function is as follows. Bifunctional enzyme which can phosphorylate or dephosphorylate isocitrate dehydrogenase (IDH) on a specific serine residue. This is a regulatory mechanism which enables bacteria to bypass the Krebs cycle via the glyoxylate shunt in response to the source of carbon. When bacteria are grown on glucose, IDH is fully active and unphosphorylated, but when grown on acetate or ethanol, the activity of IDH declines drastically concomitant with its phosphorylation. The protein is Isocitrate dehydrogenase kinase/phosphatase of Klebsiella pneumoniae subsp. pneumoniae (strain ATCC 700721 / MGH 78578).